The following is a 1563-amino-acid chain: MSVRRFLSTSARALLFTAALLPSLTSGLPSGNVRILQKGMEPEDYLSSASQNEVPHDISLPKTELADPNFLVDDMPTLLGRDAAVDPSMFTSTFTVKNGNDANYITASPVSNDASMTAISTFTSGKEASYAIQASPSTFLPDSTTTSGSQVSNAVEASSTFVADTTSTSCNPATVLIVTTSGSTSTSCPPPTTILIVTVPTTTTTTTVGYPGSVTTTLTGTPSNGTVIDTVEVPTTTNYGYTTITTGYTGSTTLTTTVPHSGNETGPTTVYVETPYPTTVTTTTTVGYPGSVTTTLTGAPSNGTVIDTVEVPTTTNYGYTTVTTGYTGSTTLTTTVPHSGNETGPTTVYVETPYPTTVTTTTTVGYPGSVTTTLTGAPSNGTVIDTVEVPTTTNYGYTTVTTGYTGSTTLTTTVPHSGNETGPTTVYVETPYPTTVTTTTTVGYPGSVTTTLTGAPSNGTVIDTVEIPTTTNYGYTTITTGYTGSTTLTTTVPHSGNETGPTTVYVETPYPTTVTTTTTVGYPGSVTTTLTGAPSNGTVIDTVEVPTTTNYGYTTITTGYTGSTTLTTTVPHSGNETGPTTVYVETPYPTTVTTTTTVGYPGSVTTTLTGAPSNGTVIDTVEVPTTTNYGYTTVTTGYTGSTTLTTTVPHSGNETGPTTVYVETPYPTTVTTTTTVGYSGSVTTTLTGSGSNSIVTETVDVPTTTSVNYGYTTITTGWTGSTTLTSIVTHSGSETGPTTVYIETPSVSATTTTTTIGYSGSLTTTLTGSSGPVVTNTVEIPYGNSSYIIPTTIVTGTVTTVTTGYTGTETSTVTVIPTGTTGTTTVVIQTPTTVTATETDIVTVTTGYTGTETSTVTVTPTGTSTGTTTVVIQTPTTVTATETDIVTVTTGYTGTETSTVTVTPTGTSTGTTTVVIQTPTTVTATETDIVTVTTGYTGTETSTVTVTPTGTSTGTTTVVIQTPTTVTATETDIVTVTTGYTGTETSTVTVTPTGTSTGTTTVVIQTPTTVTATETDIVTVTTGYTGTETSTVTVTPTGTSTGTTTVVIQTPTTVTATETDIVTVTTGYTGTETSTVTVTPTGTSTGTTTVVIQTPTTVTATETDIVTVTTGYTGTETSTVTVTPTGTATGTTTVVINTPTTTGSEVLPTTGATGTAGTETQLTTATEVQPTTGATGTAGTETQVTTGTETQATTATETQATTATEVQTTTGATGTAGTETQATTATEVQPTTGATGTAGTETQVTTATEVQPTTGATGTAGTETQVTTGTETQATTATETQATTATEVQTTTGATGTAGTETQATTATEVQPTTGATGTAGTETQVTTATEVQPTTGATGTAGTETQVTTGTETQATTATETQATTATEVQTTTGATGTAGTETQVTTATEVQPTTAVTETSSSGYYTTIVSSTVVSTVVPGSTVYPVTHVTTTTGVSGESSAFTYTTSSTQYEPSTVVTTSYYTTSVYTSAPATETVSSTEAPESSTVTSNPIYQGSGTSTWSTVRQWNGSATYNYTYYTTGGFTGGNNTNVTGLYPSSAGANKPIAYLTFVSLFVYIVTLI.

A signal peptide spans 1 to 27 (MSVRRFLSTSARALLFTAALLPSLTSG). 29 consecutive repeat copies span residues 203–280 (TTTT…PTTV), 281–358 (TTTT…PTTV), 359–436 (TTTT…PTTV), 437–514 (TTTT…PTTV), 515–592 (TTTT…PTTV), 593–670 (TTTT…PTTV), 671–750 (TTTT…VSAT), 751–825 (TTTT…GTTT), 826–869 (VVIQ…GTTT), 870–913 (VVIQ…GTTT), 914–957 (VVIQ…GTTT), 958–1001 (VVIQ…GTTT), 1002–1045 (VVIQ…GTTT), 1046–1089 (VVIQ…GTTT), 1090–1133 (VVIQ…GTTT), 1134–1140 (VVINTPT), 1141–1162 (TTGS…ETQL), 1163–1184 (TTAT…ETQV), 1185–1200 (TTGT…ETQA), 1201–1221 (TTAT…TETQ), 1223–1244 (TTAT…ETQV), 1245–1266 (TTAT…ETQV), 1267–1282 (TTGT…ETQA), 1283–1304 (TTAT…ETQA), 1305–1326 (TTAT…ETQV), 1327–1348 (TTAT…ETQV), 1349–1364 (TTGT…ETQA), 1365–1386 (TTAT…ETQV), and 1387–1397 (TTATEVQPTTA). The segment at 203-825 (TTTTTVGYPG…IPTGTTGTTT (623 aa)) is 8 X 78 AA approximate tandem repeats. Asn-224, Asn-263, Asn-302, Asn-341, Asn-380, Asn-419, Asn-458, Asn-497, Asn-536, Asn-575, Asn-614, and Asn-653 each carry an N-linked (GlcNAc...) asparagine glycan. The N-linked (GlcNAc...) asparagine glycan is linked to Asn-784. The 8 X 44 AA approximate tandem repeats stretch occupies residues 826–1140 (VVIQTPTTVT…TTTVVINTPT (315 aa)). Residues 1135–1393 (VINTPTTTGS…TQVTTATEVQ (259 aa)) form a disordered region. The interval 1141-1397 (TTGSEVLPTT…TATEVQPTTA (257 aa)) is 13 X 22 AA approximate tandem repeats. Residues Asn-1510, Asn-1516, Asn-1529, and Asn-1532 are each glycosylated (N-linked (GlcNAc...) asparagine). Ser-1539 carries the GPI-anchor amidated serine lipid modification. A propeptide spans 1540 to 1563 (SAGANKPIAYLTFVSLFVYIVTLI) (removed in mature form).

Belongs to the mam3/map4 family.

The protein localises to the cell membrane. Galactose-specific adhesion protein essential for non-sexual flocculation and filamentous growth. Required for adhesion and filamentous growth through recognition of galactose residues on cell surface glycoconjugates. Induces flocculation when overexpressed. The protein is Galactose-specific cell agglutination protein gsf2 of Schizosaccharomyces pombe (strain 972 / ATCC 24843) (Fission yeast).